Here is a 244-residue protein sequence, read N- to C-terminus: Small ribosomal subunit protein uS3 (244 aa).

The KH type-2 domain occupies 39–107; that stretch reads VREMLRKKLA…PAHINVTEVR (69 aa). Residues 213–244 form a disordered region; the sequence is VGQEKQDDSPRNDRNDRGDRGDRPSRPAREAR. Residues 216–244 are compositionally biased toward basic and acidic residues; the sequence is EKQDDSPRNDRNDRGDRGDRPSRPAREAR.

This sequence belongs to the universal ribosomal protein uS3 family. As to quaternary structure, part of the 30S ribosomal subunit. Forms a tight complex with proteins S10 and S14.

Binds the lower part of the 30S subunit head. Binds mRNA in the 70S ribosome, positioning it for translation. The chain is Small ribosomal subunit protein uS3 from Xanthomonas axonopodis pv. citri (strain 306).